Consider the following 71-residue polypeptide: MKKIVFVLVLMLSSFGAFGQETVSGQFSDALSTPITAEVYKQACDPPLPPAEVSSDWDCCDVCCNPACAGC.

Positions 1–19 are cleaved as a signal peptide; it reads MKKIVFVLVLMLSSFGAFG. Positions 20–53 are excised as a propeptide; it reads QETVSGQFSDALSTPITAEVYKQACDPPLPPAEV. 3 cysteine pairs are disulfide-bonded: Cys-59-Cys-64, Cys-60-Cys-68, and Cys-63-Cys-71.

Belongs to the heat-stable enterotoxin family.

Its subcellular location is the secreted. Toxin which activates the particulate form of guanylate cyclase and increases cyclic GMP levels within the host intestinal epithelial cells. The sequence is that of Heat-stable enterotoxin A (ystA) from Yersinia enterocolitica.